The sequence spans 418 residues: L-rhamnose isomerase (418 aa).

3 residues coordinate Mn(2+): His-262, Asp-294, and Asp-296.

The protein belongs to the rhamnose isomerase family. As to quaternary structure, homotetramer. Mn(2+) is required as a cofactor.

Its subcellular location is the cytoplasm. It carries out the reaction L-rhamnopyranose = L-rhamnulose. It functions in the pathway carbohydrate degradation; L-rhamnose degradation; glycerone phosphate from L-rhamnose: step 1/3. In terms of biological role, catalyzes the interconversion of L-rhamnose and L-rhamnulose. The chain is L-rhamnose isomerase from Yersinia pseudotuberculosis serotype IB (strain PB1/+).